A 350-amino-acid chain; its full sequence is Biotin synthase (350 aa).

Residues 38 to 256 enclose the Radical SAM core domain; it reads NHVQVSTLLS…IAVARIMMPK (219 aa). Residues cysteine 53, cysteine 57, and cysteine 60 each coordinate [4Fe-4S] cluster. Residues cysteine 97, cysteine 128, cysteine 188, and arginine 260 each contribute to the [2Fe-2S] cluster site.

This sequence belongs to the radical SAM superfamily. Biotin synthase family. Homodimer. The cofactor is [4Fe-4S] cluster. [2Fe-2S] cluster is required as a cofactor.

It carries out the reaction (4R,5S)-dethiobiotin + (sulfur carrier)-SH + 2 reduced [2Fe-2S]-[ferredoxin] + 2 S-adenosyl-L-methionine = (sulfur carrier)-H + biotin + 2 5'-deoxyadenosine + 2 L-methionine + 2 oxidized [2Fe-2S]-[ferredoxin]. It functions in the pathway cofactor biosynthesis; biotin biosynthesis; biotin from 7,8-diaminononanoate: step 2/2. In terms of biological role, catalyzes the conversion of dethiobiotin (DTB) to biotin by the insertion of a sulfur atom into dethiobiotin via a radical-based mechanism. The polypeptide is Biotin synthase (Vibrio cholerae serotype O1 (strain ATCC 39541 / Classical Ogawa 395 / O395)).